Consider the following 1456-residue polypeptide: Ig-like and fibronectin type-III domain-containing protein C27B7.7 (1456 aa).

The first 16 residues, 1–16, serve as a signal peptide directing secretion; it reads MISLSLVLLLLFGVRC. Fibronectin type-III domains are found at residues 24-128 and 132-227; these read NDDS…SINT and IPKA…TNST. Asn-64, Asn-146, Asn-164, Asn-198, and Asn-225 each carry an N-linked (GlcNAc...) asparagine glycan. Positions 236–322 constitute an Ig-like 1 domain; it reads PDEEYTADPQ…DAGDSSKEVN (87 aa). A disulfide bond links Cys-254 and Cys-308. The region spanning 328-426 is the Fibronectin type-III 3 domain; sequence PGSPPSEITL…VAMERDTQPI (99 aa). Asn-471, Asn-497, and Asn-517 each carry an N-linked (GlcNAc...) asparagine glycan. Fibronectin type-III domains lie at 531–631, 636–736, and 737–846; these read APTQ…TLNG, PPDN…TAYS, and EVPI…WFRT. Asn-658, Asn-691, and Asn-692 each carry an N-linked (GlcNAc...) asparagine glycan. The region spanning 841–948 is the Ig-like 2 domain; it reads PRWFRTGHGK…GSSSASVEIR (108 aa). Cys-877 and Cys-932 are disulfide-bonded. N-linked (GlcNAc...) asparagine glycosylation is found at Asn-893, Asn-898, Asn-969, Asn-1091, Asn-1120, Asn-1133, Asn-1151, Asn-1207, Asn-1268, Asn-1277, Asn-1298, Asn-1350, Asn-1357, and Asn-1382. Residues 955-1050 form the Fibronectin type-III 7 domain; it reads PPENIILTAY…SCISDVLYET (96 aa). 3 Fibronectin type-III domains span residues 1148–1234, 1236–1343, and 1347–1438; these read APTN…TPNG, PKTA…ISFD, and VIDN…SSPS. The tract at residues 1419 to 1456 is disordered; the sequence is LGRESPPSEEIDLEFISSPSPTPIISGSRRKVIKEPPL. Residues 1434-1445 show a composition bias toward low complexity; the sequence is ISSPSPTPIISG.

It is found in the secreted. In Caenorhabditis elegans, this protein is Ig-like and fibronectin type-III domain-containing protein C27B7.7.